We begin with the raw amino-acid sequence, 266 residues long: MICOS complex subunit MIC27 (266 aa).

Residues 1 to 27 (MAAIRMGKLTTMPAGLIYASVSVHAAK) constitute a mitochondrion transit peptide. The Mitochondrial intermembrane portion of the chain corresponds to 28-110 (EEESKKQLVK…YVYMKNPPRD (83 aa)). Residues 111–129 (FLPKMGVITVSGLAGLVSA) traverse the membrane as a helical segment. Residues 130–137 (RKGSKFKK) are Mitochondrial matrix-facing. A helical transmembrane segment spans residues 138 to 155 (ITYPLGLATLGATVCYPV). At 156 to 266 (QSVIIAKVTA…NVTNSGVLRI (111 aa)) the chain is on the mitochondrial intermembrane side. Ser-204 is subject to Phosphoserine.

The protein belongs to the apolipoprotein O/MICOS complex subunit Mic27 family. Component of the mitochondrial contact site and cristae organizing system (MICOS) complex, composed of at least MICOS10/MIC10, CHCHD3/MIC19, CHCHD6/MIC25, APOOL/MIC27, IMMT/MIC60, APOO/MIC23/MIC26 and MICOS13/MIC13. This complex was also known under the names MINOS or MitOS complex. The MICOS complex associates with mitochondrial outer membrane proteins SAMM50, MTX1 and MTX2 (together described as components of the mitochondrial outer membrane sorting assembly machinery (SAM) complex) and DNAJC11, mitochondrial inner membrane protein TMEM11 and with HSPA9. The MICOS and SAM complexes together with DNAJC11 are part of a large protein complex spanning both membranes termed the mitochondrial intermembrane space bridging (MIB) complex. Interacts with MICOS10/MIC10, IMMT/MIC60 and APOO/MIC23/MIC26.

The protein resides in the mitochondrion inner membrane. It is found in the mitochondrion. In terms of biological role, component of the MICOS complex, a large protein complex of the mitochondrial inner membrane that plays crucial roles in the maintenance of crista junctions, inner membrane architecture, and formation of contact sites to the outer membrane. Specifically binds to cardiolipin (in vitro) but not to the precursor lipid phosphatidylglycerol. Plays a crucial role in crista junction formation and mitochondrial function. This is MICOS complex subunit MIC27 (APOOL) from Pongo abelii (Sumatran orangutan).